The sequence spans 172 residues: Adenine phosphoribosyltransferase (172 aa).

It belongs to the purine/pyrimidine phosphoribosyltransferase family. Homodimer.

Its subcellular location is the cytoplasm. It carries out the reaction AMP + diphosphate = 5-phospho-alpha-D-ribose 1-diphosphate + adenine. It participates in purine metabolism; AMP biosynthesis via salvage pathway; AMP from adenine: step 1/1. Its function is as follows. Catalyzes a salvage reaction resulting in the formation of AMP, that is energically less costly than de novo synthesis. The sequence is that of Adenine phosphoribosyltransferase from Streptococcus mutans serotype c (strain ATCC 700610 / UA159).